Consider the following 324-residue polypeptide: Dolichyl-phosphate beta-glucosyltransferase (324 aa).

Residues 1-7 (MAPLLLQ) are Lumenal-facing. A helical; Signal-anchor for type II membrane protein transmembrane segment spans residues 8–28 (LAVLGAALAAAALVLISIVAF). The Cytoplasmic segment spans residues 29–324 (TTATKMPALH…WRLEQTRKMN (296 aa)).

This sequence belongs to the glycosyltransferase 2 family. As to expression, expressed in pancreas, placenta, liver, heart, brain, kidney, skeletal muscle, and lung.

The protein localises to the endoplasmic reticulum membrane. It catalyses the reaction a di-trans,poly-cis-dolichyl phosphate + UDP-alpha-D-glucose = a di-trans,poly-cis-dolichyl beta-D-glucosyl phosphate + UDP. It participates in protein modification; protein glycosylation. Its function is as follows. Dolichyl-phosphate beta-glucosyltransferase that operates in the biosynthetic pathway of dolichol-linked oligosaccharides, the glycan precursors employed in protein asparagine (N)-glycosylation. The assembly of dolichol-linked oligosaccharides begins on the cytosolic side of the endoplasmic reticulum membrane and finishes in its lumen. The sequential addition of sugars to dolichol pyrophosphate produces dolichol-linked oligosaccharides containing fourteen sugars, including two GlcNAcs, nine mannoses and three glucoses. Once assembled, the oligosaccharide is transferred from the lipid to nascent proteins by oligosaccharyltransferases. Dolichyl-phosphate beta-glucosyltransferase produces dolichyl beta-D-glucosyl phosphate/Dol-P-Glc, the glucose donor substrate used sequentially by ALG6, ALG8 and ALG10 to add glucose residues on top of the Man(9)GlcNAc(2)-PP-Dol structure. These are the three last steps in the biosynthetic pathway of dolichol-linked oligosaccharides to produce Glc(3)Man(9)GlcNAc(2)-PP-Dol. The enzyme is most probably active on the cytoplasmic side of the endoplasmic reticulum while its product Dol-P-Glc is the substrate for ALG6, ALG8 and ALG11 in the lumen of the endoplasmic reticulum. The polypeptide is Dolichyl-phosphate beta-glucosyltransferase (Homo sapiens (Human)).